The chain runs to 246 residues: MNIRNARPEDLMNMQHCNLLCLPENYQMKYYFYHGLSWPQLSYIAEDEDGKIVGYVLAKMEEDPDDVPHGHITSLAVKRSHRRLGLAQKLMDQASRAMIENFSAKYVSLHVRKSNRAALHLYSNTLNFQVSEVEPKYYADGEDAYAMKRDLAQMADELRRQLVLKKSRYVVLGSEENQEAQDSTLPDAEEACQPENPAGKGSEACQPENPAGKGSEACQPENPAGKDTGSHSTDVQDSSEYLDSTS.

The interaction with NAA15 stretch occupies residues 1-58; sequence MNIRNARPEDLMNMQHCNLLCLPENYQMKYYFYHGLSWPQLSYIAEDEDGKIVGYVLA. The N-acetyltransferase domain maps to 1–152; sequence MNIRNARPED…DAYAMKRDLA (152 aa). Positions 175-246 are disordered; the sequence is EENQEAQDST…DSSEYLDSTS (72 aa). The segment covering 230 to 246 has biased composition (polar residues); it reads SHSTDVQDSSEYLDSTS.

The protein belongs to the acetyltransferase family. ARD1 subfamily. As to quaternary structure, component of the N-terminal acetyltransferase A (NatA) complex composed of NAA11 and NAA15. Interacts with HIF1A.

It is found in the cytoplasm. The protein resides in the nucleus. The enzyme catalyses N-terminal glycyl-[protein] + acetyl-CoA = N-terminal N(alpha)-acetylglycyl-[protein] + CoA + H(+). The catalysed reaction is N-terminal L-alanyl-[protein] + acetyl-CoA = N-terminal N(alpha)-acetyl-L-alanyl-[protein] + CoA + H(+). It carries out the reaction N-terminal L-seryl-[protein] + acetyl-CoA = N-terminal N(alpha)-acetyl-L-seryl-[protein] + CoA + H(+). It catalyses the reaction N-terminal L-valyl-[protein] + acetyl-CoA = N-terminal N(alpha)-acetyl-L-valyl-[protein] + CoA + H(+). The enzyme catalyses N-terminal L-cysteinyl-[protein] + acetyl-CoA = N-terminal N(alpha)-acetyl-L-cysteinyl-[protein] + CoA + H(+). The catalysed reaction is N-terminal L-threonyl-[protein] + acetyl-CoA = N-terminal N(alpha)-acetyl-L-threonyl-[protein] + CoA + H(+). Functionally, displays alpha (N-terminal) acetyltransferase activity. Proposed alternative catalytic subunit of the N-terminal acetyltransferase A (NatA) complex. The sequence is that of N-alpha-acetyltransferase 11 (Naa11) from Rattus norvegicus (Rat).